The chain runs to 137 residues: 2-iminobutanoate/2-iminopropanoate deaminase (137 aa).

The residue at position 2 (Ser2) is an N-acetylserine. 3 positions are modified to N6-succinyllysine: Lys13, Lys60, and Lys67. Phosphothreonine is present on Thr74.

Belongs to the RutC family. As to quaternary structure, homotrimer. Interacts with YTHDF2. Liver and kidney.

The protein resides in the cytoplasm. Its subcellular location is the nucleus. The protein localises to the peroxisome. It is found in the mitochondrion. It catalyses the reaction 2-iminobutanoate + H2O = 2-oxobutanoate + NH4(+). It carries out the reaction 2-iminopropanoate + H2O = pyruvate + NH4(+). Functionally, catalyzes the hydrolytic deamination of enamine/imine intermediates that form during the course of normal metabolism. May facilitate the release of ammonia from these potentially toxic reactive metabolites, reducing their impact on cellular components. It may act on enamine/imine intermediates formed by several types of pyridoxal-5'-phosphate-dependent dehydratases including L-threonine dehydratase. Also promotes endoribonucleolytic cleavage of some transcripts by promoting recruitment of the ribonuclease P/MRP complex. Acts by bridging YTHDF2 and the ribonuclease P/MRP complex. RIDA/HRSP12 binds to N6-methyladenosine (m6A)-containing mRNAs containing a 5'-GGUUC-3' motif: cooperative binding of RIDA/HRSP12 and YTHDF2 to such transcripts lead to recruitment of the ribonuclease P/MRP complex and subsequent endoribonucleolytic cleavage. This is 2-iminobutanoate/2-iminopropanoate deaminase from Rattus norvegicus (Rat).